We begin with the raw amino-acid sequence, 274 residues long: tRNA-cytidine(32) 2-sulfurtransferase (274 aa).

A PP-loop motif motif is present at residues 40-45; sequence SGGKDS. 3 residues coordinate [4Fe-4S] cluster: Cys-115, Cys-118, and Cys-206.

This sequence belongs to the TtcA family. As to quaternary structure, homodimer. Mg(2+) is required as a cofactor. [4Fe-4S] cluster serves as cofactor.

The protein localises to the cytoplasm. It carries out the reaction cytidine(32) in tRNA + S-sulfanyl-L-cysteinyl-[cysteine desulfurase] + AH2 + ATP = 2-thiocytidine(32) in tRNA + L-cysteinyl-[cysteine desulfurase] + A + AMP + diphosphate + H(+). The protein operates within tRNA modification. In terms of biological role, catalyzes the ATP-dependent 2-thiolation of cytidine in position 32 of tRNA, to form 2-thiocytidine (s(2)C32). The sulfur atoms are provided by the cysteine/cysteine desulfurase (IscS) system. This Pseudomonas fluorescens (strain ATCC BAA-477 / NRRL B-23932 / Pf-5) protein is tRNA-cytidine(32) 2-sulfurtransferase.